Reading from the N-terminus, the 343-residue chain is Ribosomal RNA small subunit methyltransferase C (343 aa).

It belongs to the methyltransferase superfamily. RsmC family. As to quaternary structure, monomer.

Its subcellular location is the cytoplasm. It carries out the reaction guanosine(1207) in 16S rRNA + S-adenosyl-L-methionine = N(2)-methylguanosine(1207) in 16S rRNA + S-adenosyl-L-homocysteine + H(+). Its function is as follows. Specifically methylates the guanine in position 1207 of 16S rRNA in the 30S particle. This chain is Ribosomal RNA small subunit methyltransferase C, found in Escherichia coli (strain SMS-3-5 / SECEC).